The sequence spans 380 residues: Chaperone protein DnaJ (380 aa).

One can recognise a J domain in the interval 5–69; the sequence is DLYKVLGVEK…QKRAQYDQFG (65 aa). The CR-type zinc finger occupies 140 to 222; sequence GKKTTITYNR…CGGSGHTEQS (83 aa). Cys153, Cys156, Cys170, Cys173, Cys196, Cys199, Cys210, and Cys213 together coordinate Zn(2+). CXXCXGXG motif repeat units follow at residues 153-160, 170-177, 196-203, and 210-217; these read CETCGGSG, CSKCHGAG, CDVCHGTG, and CATCGGSG.

Belongs to the DnaJ family. Homodimer. Requires Zn(2+) as cofactor.

It localises to the cytoplasm. In terms of biological role, participates actively in the response to hyperosmotic and heat shock by preventing the aggregation of stress-denatured proteins and by disaggregating proteins, also in an autonomous, DnaK-independent fashion. Unfolded proteins bind initially to DnaJ; upon interaction with the DnaJ-bound protein, DnaK hydrolyzes its bound ATP, resulting in the formation of a stable complex. GrpE releases ADP from DnaK; ATP binding to DnaK triggers the release of the substrate protein, thus completing the reaction cycle. Several rounds of ATP-dependent interactions between DnaJ, DnaK and GrpE are required for fully efficient folding. Also involved, together with DnaK and GrpE, in the DNA replication of plasmids through activation of initiation proteins. The sequence is that of Chaperone protein DnaJ from Lactiplantibacillus plantarum (strain ATCC BAA-793 / NCIMB 8826 / WCFS1) (Lactobacillus plantarum).